Reading from the N-terminus, the 548-residue chain is MHIGKKNYPNLITSFRMNLKKIILNHDRFSHPERWKTNALLRFTFVYIKFLFDLMIIKNPLRMVGKTYRDAVTALNSLQSNYANIMAIRQTGDRKNTMTLLEMHEWSRRIGYSASDFNKLNIVHITGTKGKGSTAAFTSSILGQYKEQLPRIGLYTSPHLKSVRERIRINGEPISEEKFAKYFFEVWDRLDSTTSSLDKFPHMIPGSKPGYFKFLTLLSFHTFIQEDCKSCVYEVGVGGELDSTNIIEKPIVCGVTLLGIDHTFMLGDTIEEIAWNKGGIFKSGAPAFTVEKQPPQGLTILKERAEERKTTLTEVPSFKQLENVKLGIAGEFQKSNASLAVMLASEILHTSNILEEKIKCSSNASIPEKFIIGLQNTKWEXRCQVLEKGKNVWYIDGAHTKDSMVAASTWFRDTVRLSKRKKILLFNQQSRDANALVNNLYSSVSPEITFDDVIFTTNVTWKSGSYSADLVSMNTSQEDVEKLKVQESLVKNWNKIDDNRAKTHVTASIEEANELIETLYDEPADIFVTGSLHLVGGLLVVFDRIDVK.

Position 130 to 133 (130 to 133) interacts with ATP; that stretch reads GKGS. Mg(2+)-binding residues include serine 157, glutamate 234, and histidine 262. ATP-binding residues include arginine 382 and aspartate 396.

Belongs to the folylpolyglutamate synthase family. Requires a monovalent cation as cofactor.

Its subcellular location is the mitochondrion inner membrane. The protein localises to the mitochondrion matrix. The protein resides in the cytoplasm. The enzyme catalyses (6S)-5,6,7,8-tetrahydrofolyl-(gamma-L-Glu)(n) + L-glutamate + ATP = (6S)-5,6,7,8-tetrahydrofolyl-(gamma-L-Glu)(n+1) + ADP + phosphate + H(+). Its pathway is cofactor biosynthesis; tetrahydrofolylpolyglutamate biosynthesis. Catalyzes conversion of folates to polyglutamate derivatives allowing concentration of folate compounds in the cell and the intracellular retention of these cofactors, which are important substrates for most of the folate-dependent enzymes that are involved in one-carbon transfer reactions involved in purine, pyrimidine and amino acid synthesis. Required for methionine synthesis and maintenance of intact mitochondrial DNA. Involved in telomere maintenance. In Saccharomyces cerevisiae (strain FostersB) (Baker's yeast), this protein is Folylpolyglutamate synthase.